The sequence spans 231 residues: Potassium/proton antiporter CemA (231 aa).

The next 4 helical transmembrane spans lie at 7 to 27 (FISL…SLSF), 116 to 136 (IISF…LIFL), 156 to 176 (ILLL…ELMI), and 191 to 211 (IISG…KYWI).

The protein belongs to the CemA family.

The protein localises to the plastid. Its subcellular location is the chloroplast inner membrane. It carries out the reaction K(+)(in) + H(+)(out) = K(+)(out) + H(+)(in). Contributes to K(+)/H(+) antiport activity by supporting proton efflux to control proton extrusion and homeostasis in chloroplasts in a light-dependent manner to modulate photosynthesis. Prevents excessive induction of non-photochemical quenching (NPQ) under continuous-light conditions. Indirectly promotes efficient inorganic carbon uptake into chloroplasts. This is Potassium/proton antiporter CemA from Morus indica (Mulberry).